A 374-amino-acid chain; its full sequence is Type II methyltransferase M.BbvI (374 aa).

An SAM-dependent MTase C5-type domain is found at 3–347; that stretch reads FRKGELFCGP…EAVLKTFARI (345 aa). C92 is an active-site residue.

Belongs to the class I-like SAM-binding methyltransferase superfamily. C5-methyltransferase family.

It carries out the reaction a 2'-deoxycytidine in DNA + S-adenosyl-L-methionine = a 5-methyl-2'-deoxycytidine in DNA + S-adenosyl-L-homocysteine + H(+). Its function is as follows. A methylase, recognizes the double-stranded sequence 5'-GCAGC-3', methylates C-2 on both strands, and protects the DNA from cleavage by the BbvI endonuclease. This Brevibacillus brevis (Bacillus brevis) protein is Type II methyltransferase M.BbvI (bbvIM).